Reading from the N-terminus, the 130-residue chain is Small ribosomal subunit protein uS11 (130 aa).

It belongs to the universal ribosomal protein uS11 family. As to quaternary structure, part of the 30S ribosomal subunit. Interacts with proteins S7 and S18. Binds to IF-3.

Located on the platform of the 30S subunit, it bridges several disparate RNA helices of the 16S rRNA. Forms part of the Shine-Dalgarno cleft in the 70S ribosome. The chain is Small ribosomal subunit protein uS11 from Dehalococcoides mccartyi (strain ATCC BAA-2100 / JCM 16839 / KCTC 5957 / BAV1).